We begin with the raw amino-acid sequence, 863 residues long: Protein translocase subunit SecA (863 aa).

Residues Gln-88, 106–110 (GEGKT), and Asp-496 contribute to the ATP site. Positions 818-842 (EVKTEPVITKKKPARNEPCPCGSGK) are disordered. The Zn(2+) site is built by Cys-836, Cys-838, Cys-847, and Cys-848.

Belongs to the SecA family. Monomer and homodimer. Part of the essential Sec protein translocation apparatus which comprises SecA, SecYEG and auxiliary proteins SecDF-YajC and YidC. It depends on Zn(2+) as a cofactor.

It localises to the cell inner membrane. The protein resides in the cytoplasm. The catalysed reaction is ATP + H2O + cellular proteinSide 1 = ADP + phosphate + cellular proteinSide 2.. Part of the Sec protein translocase complex. Interacts with the SecYEG preprotein conducting channel. Has a central role in coupling the hydrolysis of ATP to the transfer of proteins into and across the cell membrane, serving as an ATP-driven molecular motor driving the stepwise translocation of polypeptide chains across the membrane. The chain is Protein translocase subunit SecA from Nitratiruptor sp. (strain SB155-2).